The primary structure comprises 364 residues: Chorismate synthase (364 aa).

Residue arginine 47 participates in NADP(+) binding. FMN contacts are provided by residues 124–126, 240–241, glycine 284, 299–303, and arginine 326; these read RGS, NA, and KPTPS.

The protein belongs to the chorismate synthase family. The cofactor is FMNH2.

It carries out the reaction 5-O-(1-carboxyvinyl)-3-phosphoshikimate = chorismate + phosphate. Its pathway is metabolic intermediate biosynthesis; chorismate biosynthesis; chorismate from D-erythrose 4-phosphate and phosphoenolpyruvate: step 7/7. Its function is as follows. Catalyzes the anti-1,4-elimination of the C-3 phosphate and the C-6 proR hydrogen from 5-enolpyruvylshikimate-3-phosphate (EPSP) to yield chorismate, which is the branch point compound that serves as the starting substrate for the three terminal pathways of aromatic amino acid biosynthesis. This reaction introduces a second double bond into the aromatic ring system. The polypeptide is Chorismate synthase (Methanobrevibacter smithii (strain ATCC 35061 / DSM 861 / OCM 144 / PS)).